We begin with the raw amino-acid sequence, 115 residues long: Cell division protein FtsL (115 aa).

Topologically, residues 1–25 are cytoplasmic; it reads MNTATRVIVAQNVRTRNRTFQITKQ. Residues 26-46 traverse the membrane as a helical segment; sequence GVVIVALVIALLCSAFGVVYF. The Periplasmic portion of the chain corresponds to 47-115; it reads KDLNRRLFIQ…ILVNADAMIE (69 aa).

It belongs to the FtsL family. In terms of assembly, part of a complex composed of FtsB, FtsL and FtsQ.

The protein resides in the cell inner membrane. Essential cell division protein. May link together the upstream cell division proteins, which are predominantly cytoplasmic, with the downstream cell division proteins, which are predominantly periplasmic. The polypeptide is Cell division protein FtsL (Coxiella burnetii (strain RSA 493 / Nine Mile phase I)).